Here is a 393-residue protein sequence, read N- to C-terminus: NAD(P)H-quinone oxidoreductase subunit H, chloroplastic (393 aa).

This sequence belongs to the complex I 49 kDa subunit family. As to quaternary structure, NDH is composed of at least 16 different subunits, 5 of which are encoded in the nucleus.

Its subcellular location is the plastid. The protein resides in the chloroplast thylakoid membrane. The enzyme catalyses a plastoquinone + NADH + (n+1) H(+)(in) = a plastoquinol + NAD(+) + n H(+)(out). It carries out the reaction a plastoquinone + NADPH + (n+1) H(+)(in) = a plastoquinol + NADP(+) + n H(+)(out). Functionally, NDH shuttles electrons from NAD(P)H:plastoquinone, via FMN and iron-sulfur (Fe-S) centers, to quinones in the photosynthetic chain and possibly in a chloroplast respiratory chain. The immediate electron acceptor for the enzyme in this species is believed to be plastoquinone. Couples the redox reaction to proton translocation, and thus conserves the redox energy in a proton gradient. In Solanum bulbocastanum (Wild potato), this protein is NAD(P)H-quinone oxidoreductase subunit H, chloroplastic.